A 740-amino-acid polypeptide reads, in one-letter code: 1,4-alpha-glucan branching enzyme GlgB (740 aa).

The active-site Nucleophile is the D414. E467 functions as the Proton donor in the catalytic mechanism.

Belongs to the glycosyl hydrolase 13 family. GlgB subfamily. As to quaternary structure, monomer.

The catalysed reaction is Transfers a segment of a (1-&gt;4)-alpha-D-glucan chain to a primary hydroxy group in a similar glucan chain.. Its pathway is glycan biosynthesis; glycogen biosynthesis. Functionally, catalyzes the formation of the alpha-1,6-glucosidic linkages in glycogen by scission of a 1,4-alpha-linked oligosaccharide from growing alpha-1,4-glucan chains and the subsequent attachment of the oligosaccharide to the alpha-1,6 position. The protein is 1,4-alpha-glucan branching enzyme GlgB of Rhodospirillum rubrum (strain ATCC 11170 / ATH 1.1.1 / DSM 467 / LMG 4362 / NCIMB 8255 / S1).